Reading from the N-terminus, the 311-residue chain is Methionyl-tRNA formyltransferase (311 aa).

Residue 110-113 coordinates (6S)-5,6,7,8-tetrahydrofolate; the sequence is SLLP.

Belongs to the Fmt family.

It carries out the reaction L-methionyl-tRNA(fMet) + (6R)-10-formyltetrahydrofolate = N-formyl-L-methionyl-tRNA(fMet) + (6S)-5,6,7,8-tetrahydrofolate + H(+). Functionally, attaches a formyl group to the free amino group of methionyl-tRNA(fMet). The formyl group appears to play a dual role in the initiator identity of N-formylmethionyl-tRNA by promoting its recognition by IF2 and preventing the misappropriation of this tRNA by the elongation apparatus. The sequence is that of Methionyl-tRNA formyltransferase from Streptococcus pyogenes serotype M12 (strain MGAS2096).